A 246-amino-acid chain; its full sequence is Uridylate kinase (246 aa).

16–19 (KFSG) provides a ligand contact to ATP. Gly58 contacts UMP. ATP-binding residues include Gly59 and Arg63. UMP is bound by residues Asp78 and 139–146 (TGNPFFTT). The ATP site is built by Thr166, Tyr172, and Asp175.

It belongs to the UMP kinase family. Homohexamer.

The protein localises to the cytoplasm. The enzyme catalyses UMP + ATP = UDP + ADP. The protein operates within pyrimidine metabolism; CTP biosynthesis via de novo pathway; UDP from UMP (UMPK route): step 1/1. Its activity is regulated as follows. Inhibited by UTP. Its function is as follows. Catalyzes the reversible phosphorylation of UMP to UDP. The protein is Uridylate kinase of Legionella pneumophila (strain Corby).